Reading from the N-terminus, the 491-residue chain is Probable G-protein coupled receptor Mth-like 7 (491 aa).

Residues 1–22 (MRLPWVIFCTVLLLIFTNNSNA) form the signal peptide. Residues N18 and N42 are each glycosylated (N-linked (GlcNAc...) asparagine). Residues 23 to 167 (DIPGCNYYDT…EEVSIQIFNK (145 aa)) are Extracellular-facing. Intrachain disulfides connect C27-C80, C82-C87, and C92-C103. The helical transmembrane segment at 168–188 (CGLIVWFQDGKFWVTVDLFME) threads the bilayer. Residues 189-222 (KQDYCLYRHNFDSDFPKSMWIIRHRCTSHISPGS) are Cytoplasmic-facing. The helical transmembrane segment at 223–243 (LEILIITMICFVLTIAVYLYI) threads the bilayer. At 244 to 252 (KKLRNVTGK) the chain is on the extracellular side. A glycan (N-linked (GlcNAc...) asparagine) is linked at N248. The chain crosses the membrane as a helical span at residues 253 to 273 (CIVCCIVSRFIQCLIMILDHL). At 274-325 (NLLNGICSPAGYSSHFFRMASNLWLSVISYHTWKVLTSLNRVDPNYRFLRYN) the chain is on the cytoplasmic side. The chain crosses the membrane as a helical span at residues 326–346 (AFVWSTAAIMTGSIYIVNQIW). Over 347–372 (ENDPSKWNWLPLVGFIRCSVKDWHPS) the chain is Extracellular. The chain crosses the membrane as a helical span at residues 373–393 (VWIYISGPSLALSTFNVAMFA). The Cytoplasmic segment spans residues 394-434 (LTAIYIRKVKGGINKFTNEEEGRINCINFDSQTYLQFLRLS). A helical membrane pass occupies residues 435–455 (IVMGLTWIFNVIPYSARLHIF). Residues 456–458 (WEW) are Extracellular-facing. A helical membrane pass occupies residues 459–479 (VGIISEYFHSAFGIVLFVLLV). The Cytoplasmic segment spans residues 480–491 (LKRSTWTLMMDS).

This sequence belongs to the G-protein coupled receptor 2 family. Mth subfamily.

The protein localises to the cell membrane. The protein is Probable G-protein coupled receptor Mth-like 7 (mthl7) of Drosophila melanogaster (Fruit fly).